The primary structure comprises 129 residues: Small ribosomal subunit protein uS11 (129 aa).

Belongs to the universal ribosomal protein uS11 family. Part of the 30S ribosomal subunit. Interacts with proteins S7 and S18. Binds to IF-3.

Located on the platform of the 30S subunit, it bridges several disparate RNA helices of the 16S rRNA. Forms part of the Shine-Dalgarno cleft in the 70S ribosome. The protein is Small ribosomal subunit protein uS11 of Caulobacter sp. (strain K31).